The primary structure comprises 157 residues: uncharacterized protein (157 aa).

The N-acetyltransferase domain occupies L9–E154.

This is an uncharacterized protein from Bacillus cereus (strain B4264).